Here is a 315-residue protein sequence, read N- to C-terminus: Long form salivary protein D7L1 (315 aa).

Positions 1-18 are cleaved as a signal peptide; that stretch reads MIIVAVLLSFLAHLLVQA. Disulfide bonds link Cys37–Cys73 and Cys69–Cys128. Residue Trp55 coordinates thromboxane A2. Trp58 provides a ligand contact to leukotriene C4. Tyr70 lines the thromboxane A2 pocket. Leukotriene C4 contacts are provided by Gly152 and Lys170. Lys170 contacts thromboxane A2. 2 cysteine pairs are disulfide-bonded: Cys178/Cys211 and Cys252/Cys263.

The protein belongs to the PBP/GOBP family. Distal-lateral and median lobes of female salivary gland (at protein level). Not detected in male salivary gland (at protein level). Expressed in female salivary gland. Not detected in female carcass without salivary glands. Expressed in male salivary gland and other tissues.

The protein resides in the secreted. Its function is as follows. Modulates blood feeding of female mosquitoes on vertebrate species by binding and sequestering different mediators involved in the host response. Binds leukotriene C4, leukotriene D4, leukotriene E4 and stable analogs of thromboxane A2, U-46619 and carbocyclic TXA2. Binds weakly prostaglandins: PGD2, PGE2 and PGF2alpha. Does not bind leukotriene B4, biogenic amines, ADP, platelet activating phospholipid derivative PAF and arachidonic acid. Inhibits agonist-induced smooth muscle contraction. Inhibits platelet aggregation induced by low concentrations of collagen in thromboxane A2-dependent manner. The sequence is that of Long form salivary protein D7L1 from Anopheles stephensi (Indo-Pakistan malaria mosquito).